We begin with the raw amino-acid sequence, 1496 residues long: MTDTNELFEDQTTALQNSAPIAPLANPQHTVSRGKFRSLTLINWNGFFARTFDLDELVTTLSGGNGAGKSTTMAGFVTALIPDLTLLNFRNTTEAGSTSSSRDKGLYGKLKAGVCYAVLESLNSRGQRVITGVRLQQVAGRDKKVDIRSFSLQNVPMSDSIISILTEQVGEKARVLPLADLKDKFDGSEVLFKQYHSITDYHSFMFDLGVIPKRLRSSADRSKFYKLIEASLYGGISSVITKSLRDYLLPENTGVRQAFQDMESALRENRMTLEAIKVTQSDRDMFKRLITESTNYVSADYMRNANERRGNVQIALEQRRAWYESKSKLELEQQRLIEFSREVADISENESSLEAEYNSANDHLNLVMNALRHQEKIERYQNEVAELNEKLEEQQIALEEVSEQVETAQARADDADDQVEELRSQMADYQQALDAQQTRALQYQQAIAALEKAKQLCGLPHLDLHNVEDYHAEFAAQADDLTDQVFELEQRLSVSDMAKTQFEKAYELVCKISGEIDRSEAWNEARSLLTAFTDQKMQATQAVALRQKLADLEQRLHQQQNAERLLAEFNQKAQTQFETAEELEGYFEQQQARLEDVEAELAEFVEVRSTQRQQREQLNQQYNQLAKTAPAWHTAQSALARLEEQCGEKFEASQSVMQFMQNMLTKEREATLARDELARREAALDAQITRLSQPDGSDDVRLNQLAERFGGVLLSELYDDVSIDDAPYFSALYGEARHAIVVRDLESVKAQLEKLDDCPTDLYLIEGDPSAFDDAVFTAEELAEGVVVKVSDRQWRYSKFPEVPLFGRAAREKHLETLKAERDEVSEQHAERAFDVQKCQRLHQHLSQFVGTHLSLAFQPNPEEQMQEIAAERTEIERELNQAAGNEQQLRSQLDSAKAKLQMLNKILPLVSLLEDETLADRAEECRAQLDEAEEDEQFVRQFGNYLTQLEPIAASLKSDPAKFEQLEQDYRQAKAEQKQVQQKVFALSDVIQRRVHFSYEEAIGSEGSALTEQLRTRLENAQREREQARDQLRQAQAQFTQYNQVLTGLRSSCDAKTQMLQELIREIDDLGVRGDIGAEERARSRRDELQQRLSQQRSRKGYLDKQLGTIEAEIDNLTRTLRKAERDYHTQRELVVQAKVSWCLVLKLSRNSDVEKRLNRRELAYQSAEELRSISDKALGALRTAVADNEYLRDSLRASEDSRKPENKVAFFIAVYQHLRERIRQDIIKTDDPIDAIEQMEIELSRLTNELTSREKKLAISAESVANILRKTIQREQNRILQLNQGLQNIAFGQVKGVRLVVNIRDTHAILLNALSNGREEHKDLFDSQKLSFSEALAMLYKRVNPHIEMGQRTPQTIGEELLDYRNYLDLEVETFRGADGWMRAESSALSTGEAIGTGMSILLMVVQSWEEESRRMRAKDILPSRLLFLDEAARLDATSINTLFELCERLDMQLLIAAPENISPERGTTYKLVRKITNNQEYVHVVGLKGFGQQ.

63-70 (GGNGAGKS) provides a ligand contact to ATP. Coiled coils occupy residues 328 to 493 (KLEL…QRLS), 536 to 632 (KMQA…APAW), 808 to 832 (RAAR…HAER), 861 to 1171 (NPEE…SAEE), and 1235 to 1291 (IDAI…LQNI). The tract at residues 694–811 (PDGSDDVRLN…EVPLFGRAAR (118 aa)) is flexible hinge. Basic and acidic residues predominate over residues 1082-1091 (RARSRRDELQ). The interval 1082–1101 (RARSRRDELQQRLSQQRSRK) is disordered.

It belongs to the SMC family. MukB subfamily. As to quaternary structure, homodimerization via its hinge domain. Binds to DNA via its C-terminal region. Interacts, and probably forms a ternary complex, with MukE and MukF via its C-terminal region. The complex formation is stimulated by calcium or magnesium. Interacts with tubulin-related protein FtsZ.

The protein resides in the cytoplasm. It localises to the nucleoid. Its function is as follows. Plays a central role in chromosome condensation, segregation and cell cycle progression. Functions as a homodimer, which is essential for chromosome partition. Involved in negative DNA supercoiling in vivo, and by this means organize and compact chromosomes. May achieve or facilitate chromosome segregation by condensation DNA from both sides of a centrally located replisome during cell division. This Actinobacillus pleuropneumoniae serotype 5b (strain L20) protein is Chromosome partition protein MukB.